The following is a 79-amino-acid chain: Small ribosomal subunit protein uS17 (79 aa).

It belongs to the universal ribosomal protein uS17 family. Part of the 30S ribosomal subunit.

Its function is as follows. One of the primary rRNA binding proteins, it binds specifically to the 5'-end of 16S ribosomal RNA. This Caulobacter vibrioides (strain NA1000 / CB15N) (Caulobacter crescentus) protein is Small ribosomal subunit protein uS17.